The sequence spans 445 residues: Phosphatidate cytidylyltransferase 2 (445 aa).

A compositionally biased stretch (basic and acidic residues) spans 1-39; the sequence is MTELRQRVAHEPVAPPEDKESESEAKVDGETASDSESRA. The tract at residues 1 to 49 is disordered; it reads MTELRQRVAHEPVAPPEDKESESEAKVDGETASDSESRAESAPLPVSAD. S21 carries the post-translational modification Phosphoserine. T31 is modified (phosphothreonine). Phosphoserine occurs at positions 33, 35, and 37. T51 is subject to Phosphothreonine. The next 6 membrane-spanning stretches (helical) occupy residues 79-99, 132-152, 166-186, 213-233, 262-282, and 340-360; these read MIAFFFIIIYLGPMVLMIIVM, FLLCVNYFFYGETVTDYFFTL, HRFISFTLYLIGFCMFVLSLV, LVIHNLFEGMIWFIVPISCVI, GFIGGFFATVVFGLLLSYVMS, and IALSTFASLIGPFGGFFASGF.

The protein belongs to the CDS family. As to quaternary structure, homodimer. As to expression, widely expressed. Expressed in heart, brain and retina, and to a lesser extent in placenta, lung, liver, skeletal muscle, kidney and pancreas.

It localises to the endoplasmic reticulum membrane. It catalyses the reaction a 1,2-diacyl-sn-glycero-3-phosphate + CTP + H(+) = a CDP-1,2-diacyl-sn-glycerol + diphosphate. The enzyme catalyses 1-octadecanoyl-2-(5Z,8Z,11Z,14Z-eicosatetraenoyl)-sn-glycero-3-phosphate + CTP + H(+) = 1-octadecanoyl-2-(5Z,8Z,11Z,14Z-eicosatetraenoyl)-sn-glycero-3-cytidine-5'-diphosphate + diphosphate. It carries out the reaction 1-octadecanoyl-2-(9Z,12Z-octadecadienoyl)-sn-glycero-3-phosphate + CTP + H(+) = 1-octadecanoyl-2-(9Z,12Z-octadecadienoyl)-sn-glycero-3-cytidine-5'-diphosphate + diphosphate. The catalysed reaction is 1-hexadecanoyl-2-(5Z,8Z,11Z,14Z-eicosatetraenoyl)-sn-glycero-3-phosphate + CTP + H(+) = 1-hexadecanoyl-2-(5Z,8Z,11Z,14Z-eicosatetraenoyl)-sn-glycero-3-cytidine-5'-diphosphate + diphosphate. It catalyses the reaction 1,2-di-(5Z,8Z,11Z,14Z)-eicosatetraenoyl-sn-glycero-3-phosphate + CTP + H(+) = 1,2-di-(5Z,8Z,11Z,14Z-eicosatetraenoyl)-sn-glycero-3-cytidine-5'-diphosphate + diphosphate. The enzyme catalyses 1-octadecanoyl-2-(9Z-octadecenoyl)-sn-glycero-3-phosphate + CTP + H(+) = 1-octadecanoyl-2-(9Z-octadecenoyl)-sn-glycero-3-cytidine-5'-diphosphate + diphosphate. It carries out the reaction 1-octadecanoyl-2-(4Z,7Z,10Z,13Z,16Z,19Z-docosahexaenoyl)-sn-glycero-3-phosphate + CTP + H(+) = 1-octadecanoyl-2-(4Z,7Z,10Z,13Z,16Z,19Z-docosahexaenoyl)-sn-glycero-3-cytidine-5'-diphosphate + diphosphate. The catalysed reaction is 1,2-di-(9Z,12Z-octadecadienoyl)-sn-glycero-3-phosphate + CTP + H(+) = 1,2-di-(9Z,12Z-octadecadienoyl)-sn-glycero-3-cytidine-5'-diphosphate + diphosphate. It catalyses the reaction 1,2-di-(9Z-octadecenoyl)-sn-glycero-3-phosphate + CTP + H(+) = 1,2-di-(9Z-octadecenoyl)-sn-glycero-3-cytidine-5'-diphosphate + diphosphate. It participates in phospholipid metabolism; CDP-diacylglycerol biosynthesis; CDP-diacylglycerol from sn-glycerol 3-phosphate: step 3/3. Its activity is regulated as follows. Inhibited by its anionic phospholipid end products, with phosphatidylinositol-(4,5)- bisphosphate (PIP2) showing the strongest inhibition. Inhibition is also acyl chain specific, with 1-stearoyl-2-arachidonoyl-snphosphatidylinositol showing the strongest inhibition. Catalyzes the conversion of phosphatidic acid (PA) to CDP-diacylglycerol (CDP-DAG), an essential intermediate in the synthesis of phosphatidylglycerol, cardiolipin and phosphatidylinositol. Exhibits specificity for the nature of the acyl chains at the sn-1 and sn-2 positions in the substrate, PA and the preferred acyl chain composition is 1-stearoyl-2-arachidonoyl-sn-phosphatidic acid. Plays an important role in regulating the growth and maturation of lipid droplets which are storage organelles at the center of lipid and energy homeostasis. This is Phosphatidate cytidylyltransferase 2 from Homo sapiens (Human).